A 656-amino-acid polypeptide reads, in one-letter code: uncharacterized protein (656 aa).

2 disordered regions span residues 1 to 41 and 60 to 88; these read MMAT…ESEG and SNKV…HNLE. The segment covering 22 to 36 has biased composition (low complexity); it reads SDSSDSGSDVSFFSV. Position 39 is a phosphoserine (serine 39). The segment covering 62 to 78 has biased composition (basic and acidic residues); that stretch reads KVEKDSDSEQRGRKKET.

Its subcellular location is the cytoplasm. It localises to the mitochondrion. This is an uncharacterized protein from Saccharomyces cerevisiae (strain ATCC 204508 / S288c) (Baker's yeast).